A 132-amino-acid chain; its full sequence is Tail assembly protein Gp24 (132 aa).

Belongs to the L5likevirus tail assembly protein family. In terms of assembly, interacts with tail assembly protein Gp25 and tape measure protein.

In terms of biological role, promotes tail assembly by creating a scaffold for the tail tube proteins. The tail assembly proteins Gp24 and Gp25 would wrap the linear tape measure protein to create a tail assembly scaffold. It would allow polymerization of tail tube protein during which Gp24 and Gp25 are released and therefore are absent from the mature virion. The tail assembly protein Gp25 is produced by a rare -1 ribosomal frameshift. The ratio Gp24/Gp25 is important for proper tail assembly. In Mycobacterium (Mycobacteriophage L5), this protein is Tail assembly protein Gp24 (24).